The following is a 214-amino-acid chain: A-type ATP synthase subunit D (214 aa).

This sequence belongs to the V-ATPase D subunit family. Has multiple subunits with at least A(3), B(3), C, D, E, F, H, I and proteolipid K(x).

It is found in the cell membrane. Its function is as follows. Component of the A-type ATP synthase that produces ATP from ADP in the presence of a proton gradient across the membrane. This chain is A-type ATP synthase subunit D, found in Pyrococcus furiosus (strain ATCC 43587 / DSM 3638 / JCM 8422 / Vc1).